A 216-amino-acid chain; its full sequence is Transmembrane protein 139 (216 aa).

An N-terminal signal peptide occupies residues 1-25 (MVPMHLLGRLEKPLLLLCCASFLLG). The Extracellular portion of the chain corresponds to 26 to 34 (LALLGIKTD). The helical transmembrane segment at 35–55 (ITPVAYFFLTLGGFFLFAYLL) threads the bilayer. The Cytoplasmic segment spans residues 56–216 (VRFLEWGLRS…VFYEDNWAPP (161 aa)). The disordered stretch occupies residues 104-163 (RPQELDQPPPYSTVVIPPAPEEEQPSHPEGSRRAKLEQRRMASEGSMAQEGSPGRAPINL). A compositionally biased stretch (basic and acidic residues) spans 127–145 (QPSHPEGSRRAKLEQRRMA). Ser-146 and Ser-155 each carry phosphoserine.

In terms of assembly, interacts with isoform 2 of SLC4A1.

It localises to the membrane. Functionally, may be involved in cellular trafficking of proteins such as SLC4A1. The protein is Transmembrane protein 139 (TMEM139) of Homo sapiens (Human).